The following is a 425-amino-acid chain: Monoacylglycerol lipase ABHD2 (425 aa).

Topologically, residues 1–9 (MNAMMETSE) are cytoplasmic. Residues 10–30 (LPAVFDGVKLAAVAAVLYVIV) traverse the membrane as a helical; Signal-anchor for type II membrane protein segment. Residues 31 to 425 (RCLNLKSPTA…DTELVEADLE (395 aa)) lie on the Extracellular side of the membrane. One can recognise an AB hydrolase-1 domain in the interval 128–382 (MVICPGIANH…HGGHLGFFEG (255 aa)). Asn136 carries an N-linked (GlcNAc...) asparagine glycan. Residue Ser207 is the Nucleophile of the active site. Residues Asp345 and His376 each act as charge relay system in the active site. An N-linked (GlcNAc...) asparagine glycan is attached at Asn410.

It belongs to the AB hydrolase superfamily. AB hydrolase 4 family.

It is found in the cell membrane. The catalysed reaction is Hydrolyzes glycerol monoesters of long-chain fatty acids.. The enzyme catalyses an acetyl ester + H2O = an aliphatic alcohol + acetate + H(+). It catalyses the reaction a triacylglycerol + H2O = a diacylglycerol + a fatty acid + H(+). It carries out the reaction 2-(5Z,8Z,11Z,14Z-eicosatetraenoyl)-glycerol + H2O = glycerol + (5Z,8Z,11Z,14Z)-eicosatetraenoate + H(+). The catalysed reaction is a butanoate ester + H2O = an aliphatic alcohol + butanoate + H(+). The enzyme catalyses hexadecanoate ester + H2O = an aliphatic alcohol + hexadecanoate + H(+). Acylglycerol lipase activity is activated upon binding to progesterone. Progesterone-dependent acylglycerol lipase that catalyzes hydrolysis of endocannabinoid arachidonoylglycerol (AG) from cell membrane. Acts as a progesterone receptor: progesterone-binding activates the acylglycerol lipase activity, mediating degradation of 1-arachidonoylglycerol (1AG) and 2-arachidonoylglycerol (2AG) to glycerol and arachidonic acid (AA). Also displays an ester hydrolase activity against acetyl ester, butanoate ester and hexadecanoate ester. Plays a key role in sperm capacitation in response to progesterone by mediating degradation of 2AG, an inhibitor of the sperm calcium channel CatSper, leading to calcium influx via CatSper and sperm activation. May also play a role in smooth muscle cells migration. The polypeptide is Monoacylglycerol lipase ABHD2 (ABHD2) (Bos taurus (Bovine)).